A 124-amino-acid polypeptide reads, in one-letter code: U33-theraphotoxin-Cg1a (124 aa).

An N-terminal signal peptide occupies residues 1–17; that stretch reads MKFAVAIAFTLLVCVFA. 5 disulfide bridges follow: C26/C37, C31/C51, C36/C75, C61/C83, and C77/C94. The span at 93–108 shows a compositional bias: basic and acidic residues; sequence RCQEESGKSDKSKESQ. The tract at residues 93 to 124 is disordered; it reads RCQEESGKSDKSKESQGSDESEESEESKESCG. Residues 109–118 are compositionally biased toward acidic residues; it reads GSDESEESEE.

It belongs to the neurotoxin 32 family. In terms of tissue distribution, expressed by the venom gland.

The protein resides in the secreted. This Chilobrachys guangxiensis (Chinese earth tiger tarantula) protein is U33-theraphotoxin-Cg1a.